A 118-amino-acid chain; its full sequence is Large ribosomal subunit protein bL20 (118 aa).

The protein belongs to the bacterial ribosomal protein bL20 family.

Functionally, binds directly to 23S ribosomal RNA and is necessary for the in vitro assembly process of the 50S ribosomal subunit. It is not involved in the protein synthesizing functions of that subunit. The protein is Large ribosomal subunit protein bL20 of Marinomonas sp. (strain MWYL1).